A 294-amino-acid polypeptide reads, in one-letter code: 2-methoxy-6-polyprenyl-1,4-benzoquinol methylase, mitochondrial (294 aa).

A mitochondrion-targeting transit peptide spans 1 to 10 (MALRSAAGRL). S-adenosyl-L-methionine is bound by residues Thr-100, Asp-136, and 166-167 (DA).

Belongs to the class I-like SAM-binding methyltransferase superfamily. MenG/UbiE family. As to quaternary structure, component of a multi-subunit COQ enzyme complex.

It localises to the mitochondrion inner membrane. It carries out the reaction a 2-methoxy-6-(all-trans-polyprenyl)benzene-1,4-diol + S-adenosyl-L-methionine = a 5-methoxy-2-methyl-3-(all-trans-polyprenyl)benzene-1,4-diol + S-adenosyl-L-homocysteine + H(+). Its pathway is cofactor biosynthesis; ubiquinone biosynthesis. In terms of biological role, methyltransferase required for the conversion of 2-polyprenyl-6-methoxy-1,4-benzoquinol (DDMQH2) to 2-polyprenyl-3-methyl-6-methoxy-1,4-benzoquinol (DMQH2). The polypeptide is 2-methoxy-6-polyprenyl-1,4-benzoquinol methylase, mitochondrial (Oryza sativa subsp. japonica (Rice)).